We begin with the raw amino-acid sequence, 285 residues long: MKLCGFDIGLNQPFFLIAGPCVVESEQLQMDTAGTLKEITSSLGIPFIFKSSYDKANRSSGTSFRGPGMVKGLEILAKVKRELNLPLLTDVHSEADIATVASVVDVLQTPAFLCRQTDFIHAVAQSGKPVNIKKGQFLAPGDMKNVIDKARAAAREKGLNEDNFMACERGASFGYNNLVSDMRSLAIMRETNAPVVFDATHSVQLPGGQGTSSGGQREMVPVLARAAVAVGVAGLFMETHPDPAKALSDGPNAVPLKHMKALLETLLELDRVTKKNGYLENSFGA.

This sequence belongs to the KdsA family.

It localises to the cytoplasm. The enzyme catalyses D-arabinose 5-phosphate + phosphoenolpyruvate + H2O = 3-deoxy-alpha-D-manno-2-octulosonate-8-phosphate + phosphate. It participates in carbohydrate biosynthesis; 3-deoxy-D-manno-octulosonate biosynthesis; 3-deoxy-D-manno-octulosonate from D-ribulose 5-phosphate: step 2/3. The protein operates within bacterial outer membrane biogenesis; lipopolysaccharide biosynthesis. This is 2-dehydro-3-deoxyphosphooctonate aldolase from Polaromonas sp. (strain JS666 / ATCC BAA-500).